A 521-amino-acid polypeptide reads, in one-letter code: Sodium/hydrogen exchanger 5 (521 aa).

Over 1–23 (MEEVMISPVEHDPQGQVKQQQAA) the chain is Cytoplasmic. Residues 24–44 (GVGILLQIMMLVLSFVLGHVL) form a helical membrane-spanning segment. Over 45–48 (RRHR) the chain is Lumenal. Residues 49-69 (FHYLPEASGSLLIGLIVGILA) traverse the membrane as a helical segment. At 70–86 (NISDTETSIRTWFNFHE) the chain is on the cytoplasmic side. The helical intramembrane region spans 87–107 (EFFFLFLLPPIIFQSGFSLQP). At 108 to 115 (KPFFSNFG) the chain is on the cytoplasmic side. A helical membrane pass occupies residues 116-136 (AIVTFAIIGTFVASVVTGGLV). The Lumenal segment spans residues 137 to 141 (YLGGS). 2 intramembrane regions (helical) span residues 142–162 (MYLMYKLPFVECLMFGALISA) and 166–186 (VTVLSIFQDVGTDVNLYALVF). The Lumenal segment spans residues 187–222 (GESVLNDAMAISLYRTMSLVNRQSSSGEHFFMVVIR). A helical membrane pass occupies residues 223–243 (FFETFAGSMSAGVGVGFTSAL). Residues 244–271 (LFKYAGLDTENLQNLECCLFVLFPYFSY) lie on the Cytoplasmic side of the membrane. The helical transmembrane segment at 272–292 (MLAEGVGLSGIVSILFTGIVM) threads the bilayer. Residues 293–310 (KRYTFSNLSEASQSFVSS) are Lumenal-facing. N299 carries an N-linked (GlcNAc...) asparagine glycan. A helical membrane pass occupies residues 311-331 (FFHLISSLAETFTFIYMGFDI). Residues 332–340 (AMEQHSWSH) lie on the Cytoplasmic side of the membrane. Residues 341–361 (VGFILFSILFIGVARAVNVFG) traverse the membrane as a helical segment. Residues 362 to 382 (CAYLVNLFRQENQKIPMKHQK) lie on the Lumenal side of the membrane. The helical transmembrane segment at 383-402 (ALWYSGLRGAMAFALALQSL) threads the bilayer. Topologically, residues 403–411 (HDLPEGHGQ) are cytoplasmic. A helical transmembrane segment spans residues 412 to 432 (IIFTATTTIVVVTVLLIGGST). Residues 433-521 (GKMLEALEVV…NSGDGDGDGE (89 aa)) lie on the Lumenal side of the membrane. Residues 453–480 (GFEESDHQYVPPPFSIGASSDEDTSSSG) form a disordered region. Over residues 467-480 (SIGASSDEDTSSSG) the composition is skewed to low complexity.

The protein belongs to the monovalent cation:proton antiporter 1 (CPA1) transporter (TC 2.A.36) family. Expressed in roots, leaves, stems, flowers and siliques. Detected at low levels in roots and shoots.

The protein localises to the endosome membrane. It localises to the golgi apparatus. The protein resides in the trans-Golgi network membrane. It is found in the golgi stack membrane. It carries out the reaction Na(+)(in) + H(+)(out) = Na(+)(out) + H(+)(in). The enzyme catalyses K(+)(in) + H(+)(out) = K(+)(out) + H(+)(in). Its function is as follows. Involved in trafficking to the vacuole. Required for cell proliferation and cell expansion, but not for cell differentiation. Acts in low affinity electroneutral exchange of protons for cations such as Na(+) or K(+) across membranes. May also exchange Li(+) and Cs(+) with a lower affinity. This is Sodium/hydrogen exchanger 5 (NHX5) from Arabidopsis thaliana (Mouse-ear cress).